The following is a 449-amino-acid chain: MPKPIVAIVGRPNVGKSTFFNRLIGERRAIVEDIPGTTRDRLYGDTFWNGREFTVVDTAGLLFGDEDPSLPEVEIARRTRVQAEHAIAEADAIIFMVDGRDGLTTADADVADILRTTAKPVVLAVNKCDSQERMLDAVEFYALNLGDPIPMSAFHGLGTGDVLDRLTEYFPPKTFEKDEERHLRVAIVGRPNVGKSSLLNRLLGKERSVVSPIPGTTRDPIDTTITYYGEPITLIDTAGIRRAGKIERGIEKYSVLRTLRAIERCDVAMLLVDATEGVTAQDTHIAGMVIEAKKGLILVVNKWDAITKDSQTYYEFEHRVREAFKFVDYAPIVFISALTGQRVSHLLDYAREIYAQRQKRIPTSELNNFLREVVVQQPPMAVKKGAHLRLYYAVQPQTEPPVFLFFANDSELVHWSYARYLENRLRERYGFQGTPIVIVFRSRERKEER.

EngA-type G domains are found at residues 4-174 and 183-358; these read PIVA…PPKT and LRVA…AQRQ. GTP is bound by residues 10-17, 57-61, 126-129, 189-196, 236-240, and 301-304; these read GRPNVGKS, DTAGL, NKCD, DTAGI, and NKWD. A KH-like domain is found at 359-444; the sequence is KRIPTSELNN…PIVIVFRSRE (86 aa).

It belongs to the TRAFAC class TrmE-Era-EngA-EngB-Septin-like GTPase superfamily. EngA (Der) GTPase family. In terms of assembly, associates with the 50S ribosomal subunit.

In terms of biological role, GTPase that plays an essential role in the late steps of ribosome biogenesis. This Chloroflexus aggregans (strain MD-66 / DSM 9485) protein is GTPase Der.